We begin with the raw amino-acid sequence, 598 residues long: NADH-quinone oxidoreductase subunit C/D (598 aa).

The NADH dehydrogenase I subunit C stretch occupies residues 1–189 (MTDSTTHDRE…DPFELTRQKQ (189 aa)). Residues 213–598 (DFMFLNLGPN…IDFVMSDVDR (386 aa)) form an NADH dehydrogenase I subunit D region.

It in the N-terminal section; belongs to the complex I 30 kDa subunit family. This sequence in the C-terminal section; belongs to the complex I 49 kDa subunit family. As to quaternary structure, NDH-1 is composed of 13 different subunits. Subunits NuoB, CD, E, F, and G constitute the peripheral sector of the complex.

It localises to the cell inner membrane. The catalysed reaction is a quinone + NADH + 5 H(+)(in) = a quinol + NAD(+) + 4 H(+)(out). Functionally, NDH-1 shuttles electrons from NADH, via FMN and iron-sulfur (Fe-S) centers, to quinones in the respiratory chain. The immediate electron acceptor for the enzyme in this species is believed to be ubiquinone. Couples the redox reaction to proton translocation (for every two electrons transferred, four hydrogen ions are translocated across the cytoplasmic membrane), and thus conserves the redox energy in a proton gradient. In Edwardsiella ictaluri (strain 93-146), this protein is NADH-quinone oxidoreductase subunit C/D.